We begin with the raw amino-acid sequence, 145 residues long: Large ribosomal subunit protein uL13 (145 aa).

Belongs to the universal ribosomal protein uL13 family. As to quaternary structure, part of the 50S ribosomal subunit.

Functionally, this protein is one of the early assembly proteins of the 50S ribosomal subunit, although it is not seen to bind rRNA by itself. It is important during the early stages of 50S assembly. The chain is Large ribosomal subunit protein uL13 from Staphylococcus haemolyticus (strain JCSC1435).